Consider the following 542-residue polypeptide: Chaperonin GroEL 3 (542 aa).

ATP is bound by residues 30 to 33 (TLGP), lysine 51, 87 to 91 (DGTTT), glycine 415, and aspartate 494. The interval 523-542 (KPKKKEPPMPAMPSDMGDYD) is disordered.

The protein belongs to the chaperonin (HSP60) family. Forms a cylinder of 14 subunits composed of two heptameric rings stacked back-to-back. Interacts with the co-chaperonin GroES.

The protein localises to the cytoplasm. The enzyme catalyses ATP + H2O + a folded polypeptide = ADP + phosphate + an unfolded polypeptide.. In terms of biological role, together with its co-chaperonin GroES, plays an essential role in assisting protein folding. The GroEL-GroES system forms a nano-cage that allows encapsulation of the non-native substrate proteins and provides a physical environment optimized to promote and accelerate protein folding. This chain is Chaperonin GroEL 3, found in Syntrophus aciditrophicus (strain SB).